We begin with the raw amino-acid sequence, 348 residues long: Probable dual-specificity RNA methyltransferase RlmN (348 aa).

The active-site Proton acceptor is Glu-93. Residues 99–333 (TEKRLTACLS…VSLRKSRGLD (235 aa)) form the Radical SAM core domain. Cys-106 and Cys-338 are oxidised to a cystine. [4Fe-4S] cluster is bound by residues Cys-113, Cys-117, and Cys-120. S-adenosyl-L-methionine-binding positions include 160 to 161 (GE), Ser-190, 219 to 221 (SLH), and Asn-295. The S-methylcysteine intermediate role is filled by Cys-338.

The protein belongs to the radical SAM superfamily. RlmN family. It depends on [4Fe-4S] cluster as a cofactor.

Its subcellular location is the cytoplasm. The catalysed reaction is adenosine(2503) in 23S rRNA + 2 reduced [2Fe-2S]-[ferredoxin] + 2 S-adenosyl-L-methionine = 2-methyladenosine(2503) in 23S rRNA + 5'-deoxyadenosine + L-methionine + 2 oxidized [2Fe-2S]-[ferredoxin] + S-adenosyl-L-homocysteine. It catalyses the reaction adenosine(37) in tRNA + 2 reduced [2Fe-2S]-[ferredoxin] + 2 S-adenosyl-L-methionine = 2-methyladenosine(37) in tRNA + 5'-deoxyadenosine + L-methionine + 2 oxidized [2Fe-2S]-[ferredoxin] + S-adenosyl-L-homocysteine. Specifically methylates position 2 of adenine 2503 in 23S rRNA and position 2 of adenine 37 in tRNAs. This chain is Probable dual-specificity RNA methyltransferase RlmN, found in Prochlorococcus marinus (strain MIT 9215).